The sequence spans 125 residues: Basic leucine zipper transcriptional factor ATF-like (125 aa).

Residues 1 to 14 show a composition bias toward low complexity; that stretch reads MPHSSDSSDSSFSR. A disordered region spans residues 1-58; the sequence is MPHSSDSSDSSFSRSPPPGKQDSSDDVRRVQRREKNRIAAQKSRQRQTQKADTLHLES. The 64-residue stretch at 26 to 89 folds into the bZIP domain; that stretch reads DVRRVQRREK…KYFTSVLNSH (64 aa). The segment at 28 to 50 is basic motif; that stretch reads RRVQRREKNRIAAQKSRQRQTQK. A Phosphoserine modification is found at Ser43. Thr48 is subject to Phosphothreonine. Residues 54–75 form a leucine-zipper region; that stretch reads LHLESEDLEKQNAALRKEIKQL.

The protein belongs to the bZIP family. As to quaternary structure, heterodimer; mainly heterodimerizes with JUNB. The BATF-JUNB heterodimer interacts with IRF4 and IRF8. Interacts (via bZIP domain) with IRF4 and IRF8; the interaction is direct. Also forms heterodimers with JUN and JUND. Also interacts with IFI35. Phosphorylated on serine and threonine residues and at least one tyrosine residue. Phosphorylation at Ser-43 inhibit DNA binding activity and transforms it as a negative regulator of AP-1 mediated transcription. In terms of processing, phosphorylated. As to expression, expressed at highest levels in lung, and at lower levels in placenta, liver, kidney, spleen, and peripheral blood. Detected in SW480 colorectal cancer cell line and several hematopoietic tumor cell lines, including Raji Burkitt's lymphoma. Strongly expressed in mature B- and T-lymphocytes. Also expressed in moderate levels in lymph node and appendix and at low levels in thymus and bone marrow.

Its subcellular location is the nucleus. The protein localises to the cytoplasm. In terms of biological role, AP-1 family transcription factor that controls the differentiation of lineage-specific cells in the immune system: specifically mediates the differentiation of T-helper 17 cells (Th17), follicular T-helper cells (TfH), CD8(+) dendritic cells and class-switch recombination (CSR) in B-cells. Acts via the formation of a heterodimer with JUNB that recognizes and binds DNA sequence 5'-TGA[CG]TCA-3'. The BATF-JUNB heterodimer also forms a complex with IRF4 (or IRF8) in immune cells, leading to recognition of AICE sequence (5'-TGAnTCA/GAAA-3'), an immune-specific regulatory element, followed by cooperative binding of BATF and IRF4 (or IRF8) and activation of genes. Controls differentiation of T-helper cells producing interleukin-17 (Th17 cells) by binding to Th17-associated gene promoters: regulates expression of the transcription factor RORC itself and RORC target genes such as IL17 (IL17A or IL17B). Also involved in differentiation of follicular T-helper cells (TfH) by directing expression of BCL6 and MAF. In B-cells, involved in class-switch recombination (CSR) by controlling the expression of both AICDA and of germline transcripts of the intervening heavy-chain region and constant heavy-chain region (I(H)-C(H)). Following infection, can participate in CD8(+) dendritic cell differentiation via interaction with IRF4 and IRF8 to mediate cooperative gene activation. Regulates effector CD8(+) T-cell differentiation by regulating expression of SIRT1. Following DNA damage, part of a differentiation checkpoint that limits self-renewal of hematopoietic stem cells (HSCs): up-regulated by STAT3, leading to differentiation of HSCs, thereby restricting self-renewal of HSCs. This chain is Basic leucine zipper transcriptional factor ATF-like (BATF), found in Homo sapiens (Human).